Reading from the N-terminus, the 373-residue chain is Unsaturated rhamnogalacturonyl hydrolase YteR (373 aa).

Residues 40 to 41 (HY), aspartate 88, and 132 to 136 (HKDGY) each bind substrate. Aspartate 143 (proton donor) is an active-site residue. Substrate is bound by residues 213–217 (RSIGW) and 333–334 (TS).

Belongs to the glycosyl hydrolase 105 family. As to quaternary structure, monomer.

The protein localises to the cytoplasm. It carries out the reaction 2-O-(4-deoxy-beta-L-threo-hex-4-enopyranuronosyl)-alpha-L-rhamnose + H2O = 5-dehydro-4-deoxy-D-glucuronate + L-rhamnopyranose. In terms of biological role, catalyzes the hydrolysis of unsaturated rhamnogalacturonan disaccharide to yield unsaturated D-galacturonic acid and L-rhamnose. It cannot act on unsaturated glucuronyl hydrolase (UGL) substrates containing unsaturated D-glucuronic acid at the non-reducing terminus, although the active pockets of YesR and UGL are very similar. The protein is Unsaturated rhamnogalacturonyl hydrolase YteR (yteR) of Bacillus subtilis (strain 168).